Consider the following 379-residue polypeptide: Cell division protein FtsZ (379 aa).

Residues 18-22, 105-107, E136, R140, and D184 contribute to the GTP site; these read GGGVN and GTG.

Belongs to the FtsZ family. In terms of assembly, homodimer. Polymerizes to form a dynamic ring structure in a strictly GTP-dependent manner. Interacts directly with several other division proteins.

Its subcellular location is the cytoplasm. Essential cell division protein that forms a contractile ring structure (Z ring) at the future cell division site. The regulation of the ring assembly controls the timing and the location of cell division. One of the functions of the FtsZ ring is to recruit other cell division proteins to the septum to produce a new cell wall between the dividing cells. Binds GTP and shows GTPase activity. The polypeptide is Cell division protein FtsZ (Mycobacterium leprae (strain TN)).